Consider the following 433-residue polypeptide: MNELSDESILKYTKKISENATIDNWNDYKWQLSNSIKDVDTLENFLGITFDEKEKTEIQKAIDVFPMSITPYYASLIDIKNLGKDPIYKQSVASSKELILENFEMEDPLSEDEDSPVIGITHRYPDRVLFYINPNCAMYCRHCTRKRKVSEKSSNPSKEEIQKAIDYIKNNNKIRDVLLSGGDPLLLSDEFLDWILSEISSIKHVELIRIGSRVPVVLPQRITDNLVNVLKKYHPIWINTHYNHPVEITKESKKALDKLSDSGIPLGNQTVLLAGVNDCPYVMRKLNQKLVSSRVRPYYLYQCDLSKGISHFRTSVSKGLEIIESLIGHTTGFAVPRYVVDAPGGGGKIPVMPNYVVSWGSDRVILRNYEGIITSYVEPSDYGGCSKNCDTCDRMCIGDFEINQTGIEKLITDVDNSISLIPENNERVARRDD.

Residues 122–334 (HRYPDRVLFY…SLIGHTTGFA (213 aa)) form the Radical SAM core domain. The [4Fe-4S] cluster site is built by C136, C140, and C143. C279 is a binding site for Zn(2+). Position 348 is an N6-(pyridoxal phosphate)lysine (K348). Zn(2+)-binding residues include C389, C392, and C396.

Belongs to the radical SAM superfamily. KamA family. It depends on [4Fe-4S] cluster as a cofactor. Pyridoxal 5'-phosphate is required as a cofactor. The cofactor is Zn(2+).

The catalysed reaction is L-lysine = (3S)-3,6-diaminohexanoate. Catalyzes the interconversion of L-alpha-lysine and L-beta-lysine. Is involved in the biosynthesis pathway of N6-acetyl-beta-lysine, a compatible solute produced by methanogenic archaea that helps cells to cope with salt stress. This is L-lysine 2,3-aminomutase (ablA) from Methanococcus maripaludis (strain DSM 14266 / JCM 13030 / NBRC 101832 / S2 / LL).